Here is a 308-residue protein sequence, read N- to C-terminus: Cytochrome b (308 aa).

4 helical membrane-spanning segments follow: residues 1–21 (FGSL…LLAT), 45–66 (WLIR…YLHI), 81–101 (WNTG…GYVL), and 146–166 (FFAL…IHFT). Position 65 (His65) interacts with heme b. Positions 150 and 164 each coordinate heme b. An a ubiquinone-binding site is contributed by His169. The next 3 membrane-spanning stretches (helical) occupy residues 194–214 (VKDI…ALFS), 256–276 (LGGV…PFLH), and 288–308 (LSQF…WVGS).

This sequence belongs to the cytochrome b family. As to quaternary structure, the cytochrome bc1 complex contains 11 subunits: 3 respiratory subunits (MT-CYB, CYC1 and UQCRFS1), 2 core proteins (UQCRC1 and UQCRC2) and 6 low-molecular weight proteins (UQCRH/QCR6, UQCRB/QCR7, UQCRQ/QCR8, UQCR10/QCR9, UQCR11/QCR10 and a cleavage product of UQCRFS1). This cytochrome bc1 complex then forms a dimer. It depends on heme b as a cofactor.

It localises to the mitochondrion inner membrane. Functionally, component of the ubiquinol-cytochrome c reductase complex (complex III or cytochrome b-c1 complex) that is part of the mitochondrial respiratory chain. The b-c1 complex mediates electron transfer from ubiquinol to cytochrome c. Contributes to the generation of a proton gradient across the mitochondrial membrane that is then used for ATP synthesis. In Colaptes rupicola (Southern Andean flicker), this protein is Cytochrome b (MT-CYB).